Reading from the N-terminus, the 329-residue chain is uncharacterized protein (329 aa).

The segment at 284–303 is disordered; the sequence is SGGGHSEAGGLNAPYDKSKS.

This is an uncharacterized protein from Methanocaldococcus jannaschii (strain ATCC 43067 / DSM 2661 / JAL-1 / JCM 10045 / NBRC 100440) (Methanococcus jannaschii).